The sequence spans 224 residues: UPF0758 protein ABO_0214 (224 aa).

The region spanning 102–224 is the MPN domain; that stretch reads PLDNPDKAGQ…WVSLASRGAV (123 aa). Positions 173, 175, and 186 each coordinate Zn(2+). The JAMM motif motif lies at 173 to 186; sequence HNHPSGVAEPSQSD.

This sequence belongs to the UPF0758 family.

The polypeptide is UPF0758 protein ABO_0214 (Alcanivorax borkumensis (strain ATCC 700651 / DSM 11573 / NCIMB 13689 / SK2)).